An 885-amino-acid chain; its full sequence is GPI ethanolamine phosphate transferase 2 (885 aa).

3 N-linked (GlcNAc...) asparagine glycosylation sites follow: Asn-82, Asn-155, and Asn-194. The chain crosses the membrane as a helical span at residues 413–433; the sequence is DIYAGALILVITALAVIVVFN. N-linked (GlcNAc...) asparagine glycosylation occurs at Asn-443. 3 helical membrane passes run 447 to 467, 473 to 493, and 495 to 514; these read VMFY…SSLI, IWYF…FDTF, and SLQN…FMRS. N-linked (GlcNAc...) asparagine glycosylation is present at Asn-516. The next 8 membrane-spanning stretches (helical) occupy residues 539 to 559, 581 to 601, 648 to 668, 697 to 717, 726 to 746, 768 to 788, 820 to 840, and 865 to 885; these read LMWG…YIQG, GLIS…FKLL, IQLS…RVII, ENIP…KLIY, YILT…FCMG, VFLV…FWSL, ILLV…VNLV, and SWIL…VLLF.

This sequence belongs to the PIGG/PIGN/PIGO family. PIGG subfamily.

The protein resides in the endoplasmic reticulum membrane. It participates in glycolipid biosynthesis; glycosylphosphatidylinositol-anchor biosynthesis. Functionally, ethanolamine phosphate transferase involved in glycosylphosphatidylinositol-anchor biosynthesis. Transfers ethanolamine phosphate to the GPI second mannose. The polypeptide is GPI ethanolamine phosphate transferase 2 (GPI7) (Candida albicans (strain SC5314 / ATCC MYA-2876) (Yeast)).